Here is a 522-residue protein sequence, read N- to C-terminus: MEYLPYIATSIACIVILRWALNMMQWLWFEPRRLEKLLRKQGLQGNSYKFLFGDMKESSMLRNEALAKPMPMPFDNDYFPRINPFVDQLLNKYGMNCFLWMGPVPAIQIGEPELVREAFNRMHEFQKPKTNPLSALLATGLVSYEGDKWAKHRRLINPSFHVEKLKLMIPAFRESIVEVVNQWEKKVPENGSAEIDVWPSLTSLTGDVISRAAFGSVYGDGRRIFELLAVQKELVLSLLKFSYIPGYTYLPTEGNKKMKAVNNEIQRLLENVIQNRKKAMEAGEAAKDDLLGLLMDSNYKESMLEGGGKNKKLIMSFQDLIDECKLFFLAGHETTAVLLVWTLILLCKHQDWQTKAREEVLATFGMSEPTDYDALNRLKIVTMILNEVLRLYPPVVSTNRKLFKGETKLGNLVIPPGVGISLLTIQANRDPKVWGEDASEFRPDRFAEGLVKATKGNVAFFPFGWGPRICIGQNFALTESKMAVAMILQRFTFDLSPSYTHAPSGLITLNPQYGAPLMFRRR.

Residues 4–24 (LPYIATSIACIVILRWALNMM) form a helical; Signal-anchor for type II membrane protein membrane-spanning segment. N-linked (GlcNAc...) asparagine glycosylation is present at N190. A heme-binding site is contributed by C470.

The protein belongs to the cytochrome P450 family. Heme is required as a cofactor. In terms of tissue distribution, mainly expressed in flowers and flower buds, to a lesser extent in young leaves and, at low levels, in old leaves, stems and roots.

It is found in the membrane. Its pathway is secondary metabolite biosynthesis; terpenoid biosynthesis. Component of the oleanane-type triterpene saponins (e.g. saponarioside A and saponarioside B) biosynthetic pathway, leading to the production of natural products with detergent properties used as traditional sources of soap. An oxidoreductase that facilitates the oxidation of the methyl group to a carboxyl group at the C-23 position of echinocystic acid, resulting in the formation of quillaic acid (QA). In Saponaria officinalis (Common soapwort), this protein is Echinocystic acid 23-monooxygenase.